The following is a 277-amino-acid chain: 3-methyl-2-oxobutanoate hydroxymethyltransferase (277 aa).

Asp43 and Asp82 together coordinate Mg(2+). 3-methyl-2-oxobutanoate contacts are provided by residues 43–44, Asp82, and Lys112; that span reads DS. Glu114 is a binding site for Mg(2+). The active-site Proton acceptor is the Glu181.

Belongs to the PanB family. In terms of assembly, homodecamer; pentamer of dimers. Requires Mg(2+) as cofactor.

It is found in the cytoplasm. It carries out the reaction 3-methyl-2-oxobutanoate + (6R)-5,10-methylene-5,6,7,8-tetrahydrofolate + H2O = 2-dehydropantoate + (6S)-5,6,7,8-tetrahydrofolate. It functions in the pathway cofactor biosynthesis; (R)-pantothenate biosynthesis; (R)-pantoate from 3-methyl-2-oxobutanoate: step 1/2. Catalyzes the reversible reaction in which hydroxymethyl group from 5,10-methylenetetrahydrofolate is transferred onto alpha-ketoisovalerate to form ketopantoate. This is 3-methyl-2-oxobutanoate hydroxymethyltransferase from Bacillus subtilis (strain 168).